We begin with the raw amino-acid sequence, 692 residues long: MRTENCLVELGTEELPPKALKSLGEAFATQFEAALSQADLSFDSVSWFAAPRRLAVYVSGLAEGQADKVVEKRGPAVSAAFDADGNPTKAAQGWARGNGIDVADAERLVTDKGEWLLHKAHVPGQSVAELLEGLINQAVSKLPIPKPMRWGNYNTQFIRPVHTLCVLYGSEVVNVSVLGLTSGRVVQGHRFHGEGRFELDHADNYASALEQQYVLADFEARKDKVRQQLEDAAKNLSLKPDYDEELLEEIASLVEWPVVLQAGFDKGFLEVPKEALIYTMKDDQKYVPLLDSDGALSNTFLFVTNIESHDASQVISGNEKVIRPRLADAEFFFNSDKKTTLESRLESLETVLFQKQLGTLKEKSERISALSAFIASQIDANETQAARAGLLAKTDLMSNMVMEFPDVQGVMGKYYALNDGEDAPVAEALYEQYMPRFAGDALPSSGVSASVALADKLDTLVGIFGIGQLPKGDKDPFALRRAAIGVLRIVTELSLPLDLETLVSKAIDVYGNKLTNAETQTQVVDFVLGRFNALLQDQAIAIDVIQAVAARRPTKPSDYLARVHAVDKFKALEEAEALAAANKRVANILAKQNVEVTATVNIDESLLAEDAEKALYVELKAAQKEVEIAVPSQDYTRILTTLATLRNVIDNFFDNVMVMADDEAVKHNRLALLSLLRQLFLTTADISILAKS.

It belongs to the class-II aminoacyl-tRNA synthetase family. As to quaternary structure, tetramer of two alpha and two beta subunits.

The protein localises to the cytoplasm. The enzyme catalyses tRNA(Gly) + glycine + ATP = glycyl-tRNA(Gly) + AMP + diphosphate. The chain is Glycine--tRNA ligase beta subunit from Alteromonas mediterranea (strain DSM 17117 / CIP 110805 / LMG 28347 / Deep ecotype).